The following is a 301-amino-acid chain: Inosose dehydratase (301 aa).

The protein belongs to the IolE/MocC family. Requires glutathione as cofactor. It depends on Co(2+) as a cofactor. Mn(2+) is required as a cofactor.

It catalyses the reaction scyllo-inosose = 3D-3,5/4-trihydroxycyclohexane-1,2-dione + H2O. Its pathway is polyol metabolism; myo-inositol degradation into acetyl-CoA; acetyl-CoA from myo-inositol: step 2/7. In terms of biological role, catalyzes the dehydration of inosose (2-keto-myo-inositol, 2KMI or 2,4,6/3,5-pentahydroxycyclohexanone) to 3D-(3,5/4)-trihydroxycyclohexane-1,2-dione (D-2,3-diketo-4-deoxy-epi-inositol). This is Inosose dehydratase from Lacticaseibacillus casei (strain BL23) (Lactobacillus casei).